The primary structure comprises 307 residues: Agmatinase (307 aa).

Positions 128, 151, 153, 155, 232, and 234 each coordinate Mn(2+).

This sequence belongs to the arginase family. Agmatinase subfamily. Mn(2+) is required as a cofactor.

It carries out the reaction agmatine + H2O = urea + putrescine. Its pathway is amine and polyamine biosynthesis; putrescine biosynthesis via agmatine pathway; putrescine from agmatine: step 1/1. Catalyzes the formation of putrescine from agmatine. The sequence is that of Agmatinase from Neisseria meningitidis serogroup C (strain 053442).